The sequence spans 574 residues: DNA mismatch repair protein MutL (574 aa).

This sequence belongs to the DNA mismatch repair MutL/HexB family.

In terms of biological role, this protein is involved in the repair of mismatches in DNA. It is required for dam-dependent methyl-directed DNA mismatch repair. May act as a 'molecular matchmaker', a protein that promotes the formation of a stable complex between two or more DNA-binding proteins in an ATP-dependent manner without itself being part of a final effector complex. The sequence is that of DNA mismatch repair protein MutL from Coxiella burnetii (strain Dugway 5J108-111).